The following is a 225-amino-acid chain: Sugar fermentation stimulation protein homolog (225 aa).

This sequence belongs to the SfsA family.

The chain is Sugar fermentation stimulation protein homolog from Sulfolobus acidocaldarius (strain ATCC 33909 / DSM 639 / JCM 8929 / NBRC 15157 / NCIMB 11770).